Consider the following 742-residue polypeptide: 5-methyltetrahydropteroyltriglutamate--homocysteine methyltransferase (742 aa).

Residues 18–21 (REWK) and lysine 112 contribute to the 5-methyltetrahydropteroyltri-L-glutamate site. L-homocysteine contacts are provided by residues 420-422 (IGS) and glutamate 473. Residues 420–422 (IGS) and glutamate 473 contribute to the L-methionine site. Residue tryptophan 550 coordinates 5-methyltetrahydropteroyltri-L-glutamate. An L-homocysteine-binding site is contributed by aspartate 588. Aspartate 588 provides a ligand contact to L-methionine. Position 594 (glutamate 594) interacts with 5-methyltetrahydropteroyltri-L-glutamate. Zn(2+)-binding residues include histidine 630, cysteine 632, and glutamate 654. The Proton donor role is filled by histidine 683. Cysteine 715 provides a ligand contact to Zn(2+).

It belongs to the vitamin-B12 independent methionine synthase family. Zn(2+) serves as cofactor.

It carries out the reaction 5-methyltetrahydropteroyltri-L-glutamate + L-homocysteine = tetrahydropteroyltri-L-glutamate + L-methionine. It participates in amino-acid biosynthesis; L-methionine biosynthesis via de novo pathway; L-methionine from L-homocysteine (MetE route): step 1/1. Functionally, catalyzes the transfer of a methyl group from 5-methyltetrahydrofolate to homocysteine resulting in methionine formation. The protein is 5-methyltetrahydropteroyltriglutamate--homocysteine methyltransferase of Staphylococcus aureus (strain MRSA252).